Here is a 472-residue protein sequence, read N- to C-terminus: 2-oxoisovalerate dehydrogenase subunit alpha 2, mitochondrial (472 aa).

185–187 (QYR) contributes to the thiamine diphosphate binding site. Ser234, Thr239, and Gln240 together coordinate K(+).

It belongs to the BCKDHA family. As to quaternary structure, heterotetramer of alpha and beta chains. Thiamine diphosphate serves as cofactor.

The protein resides in the mitochondrion matrix. It carries out the reaction N(6)-[(R)-lipoyl]-L-lysyl-[protein] + 3-methyl-2-oxobutanoate + H(+) = N(6)-[(R)-S(8)-2-methylpropanoyldihydrolipoyl]-L-lysyl-[protein] + CO2. In terms of biological role, the branched-chain alpha-keto dehydrogenase complex catalyzes the overall conversion of alpha-keto acids to acyl-CoA and CO(2). It contains multiple copies of three enzymatic components: branched-chain alpha-keto acid decarboxylase (E1), lipoamide acyltransferase (E2) and lipoamide dehydrogenase (E3). The sequence is that of 2-oxoisovalerate dehydrogenase subunit alpha 2, mitochondrial from Arabidopsis thaliana (Mouse-ear cress).